The following is a 191-amino-acid chain: Putative glutathione-dependent formaldehyde-activating enzyme (191 aa).

Residues 20–166 (FSGGTLRCHC…FKSVGLETYD (147 aa)) form the CENP-V/GFA domain. Positions 27, 29, 48, 50, 53, 95, and 98 each coordinate Zn(2+).

This sequence belongs to the Gfa family. It depends on Zn(2+) as a cofactor.

It carries out the reaction S-(hydroxymethyl)glutathione = glutathione + formaldehyde. It functions in the pathway one-carbon metabolism; formaldehyde degradation; formate from formaldehyde (glutathione route): step 1/3. Its function is as follows. Catalyzes the condensation of formaldehyde and glutathione to S-hydroxymethylglutathione. The chain is Putative glutathione-dependent formaldehyde-activating enzyme from Colletotrichum graminicola (strain M1.001 / M2 / FGSC 10212) (Maize anthracnose fungus).